The following is a 214-amino-acid chain: Oocyte zinc finger protein XlCOF10 (214 aa).

C2H2-type zinc fingers lie at residues phenylalanine 1–histidine 23, phenylalanine 29–histidine 51, phenylalanine 57–histidine 79, phenylalanine 85–histidine 107, phenylalanine 113–histidine 135, phenylalanine 141–histidine 163, and phenylalanine 169–histidine 191.

This sequence belongs to the krueppel C2H2-type zinc-finger protein family.

Its subcellular location is the nucleus. In terms of biological role, may be involved in transcriptional regulation. The sequence is that of Oocyte zinc finger protein XlCOF10 from Xenopus laevis (African clawed frog).